The chain runs to 293 residues: MTHDYIVRGLAYGGEIRAYAAITTESVQEAQTRHYTWPTASAAMGRTMTATVMMGAMLKGNQKLTVTVDGKGPIGRIIADADAQGNVRAYVDHPQTHFPLNDQGKLDVRRAVGTDGSIQVVKDVGMKDYFSGASPIVSGELGDDFTYYYATSEQTPSSVGLGVLVNPDNSIKAAGGFIIQVMPGATDETVTKLEEAISQMQPVSKLIEQGLTPEGILNEILGEGNVQILNSTSAQFECNCSHEKFLNAIKGLGEAEIHSMIKEDHGAEAVCHFCGNKYQYSESELEDLLETMK.

2 cysteine pairs are disulfide-bonded: C238-C240 and C271-C274.

This sequence belongs to the HSP33 family. Post-translationally, under oxidizing conditions two disulfide bonds are formed involving the reactive cysteines. Under reducing conditions zinc is bound to the reactive cysteines and the protein is inactive.

Its subcellular location is the cytoplasm. In terms of biological role, redox regulated molecular chaperone. Protects both thermally unfolding and oxidatively damaged proteins from irreversible aggregation. Plays an important role in the bacterial defense system toward oxidative stress. This Staphylococcus epidermidis (strain ATCC 35984 / DSM 28319 / BCRC 17069 / CCUG 31568 / BM 3577 / RP62A) protein is 33 kDa chaperonin.